The primary structure comprises 291 residues: MTNKITERITGHTELIGLIATPIRHSLSPTMHNEAFAKLGLDYVYLAFEVGDKELKDVVQGFRAMNLRGWNVSMPNKTNIHKYLDKLSPAAELVGAVNTVVNDDGVLTGHITDGTGYMRALKEAGHDIIGKKMTICGAGGAATAICIQAALDGVKEISIFNRKDDFYANAEKTVEKINSKTDCKAQLFDIEDHEQLRKEIAESVIFTNATGVGMKPFEGETLLPSADMLRPELIVSDVVYKPTKTRLLEIAEEQGCQTLNGLGMMLWQGAKAFEIWTHKEMPVDYIKEILF.

Shikimate-binding positions include 26–28 (SLS) and Ser73. Lys77 serves as the catalytic Proton acceptor. Shikimate contacts are provided by Asn98 and Asp113. NADP(+)-binding positions include 137–141 (GAGGA) and Val238. Tyr240 is a binding site for shikimate. Residue Gly261 participates in NADP(+) binding.

It belongs to the shikimate dehydrogenase family. As to quaternary structure, homodimer.

It catalyses the reaction shikimate + NADP(+) = 3-dehydroshikimate + NADPH + H(+). It participates in metabolic intermediate biosynthesis; chorismate biosynthesis; chorismate from D-erythrose 4-phosphate and phosphoenolpyruvate: step 4/7. Functionally, involved in the biosynthesis of the chorismate, which leads to the biosynthesis of aromatic amino acids. Catalyzes the reversible NADPH linked reduction of 3-dehydroshikimate (DHSA) to yield shikimate (SA). The polypeptide is Shikimate dehydrogenase (NADP(+)) (Listeria monocytogenes serotype 4b (strain F2365)).